The following is a 156-amino-acid chain: Oxidized purine nucleoside triphosphate hydrolase (156 aa).

In terms of domain architecture, Nudix hydrolase spans 3-132; the sequence is TSKLLTLVLV…WFPLMLQKKR (130 aa). Thr-8 serves as a coordination point for 2-oxo-dATP. Residues Thr-8, Lys-23, Asn-33, and 35–38 each bind O(6)-methyl-dGMP; that span reads FGGK. Lys-23 serves as a coordination point for 8-oxo-dGTP. 2-oxo-dATP-binding positions include Asn-33 and 35 to 38; that span reads FGGK. Residues Gly-36, Glu-52, Glu-55, Glu-56, and Glu-100 each contribute to the Mg(2+) site. The Nudix box signature appears at 37–58; the sequence is GKVQTGETIEQAARRELLEESG. 117 to 120 is a 2-oxo-dATP binding site; it reads WADD. 117 to 120 provides a ligand contact to O(6)-methyl-dGMP; sequence WADD.

Belongs to the Nudix hydrolase family. In terms of assembly, monomer. It depends on Mg(2+) as a cofactor.

It localises to the cytoplasm. It is found in the cytosol. Its subcellular location is the mitochondrion matrix. The protein localises to the nucleus. It catalyses the reaction 2-oxo-dATP + H2O = 2-oxo-dAMP + diphosphate + H(+). It carries out the reaction 2-oxo-ATP + H2O = 2-oxo-AMP + diphosphate + H(+). The enzyme catalyses 8-oxo-dGTP + H2O = 8-oxo-dGMP + diphosphate + H(+). The catalysed reaction is 8-oxo-dATP + H2O = 8-oxo-dAMP + diphosphate + H(+). It catalyses the reaction O(6)-methyl-dGTP + H2O = O(6)-methyl-dGMP + diphosphate + H(+). It carries out the reaction N(6)-methyl-dATP + H2O = N(6)-methyl-dAMP + diphosphate + H(+). The enzyme catalyses N(6)-methyl-ATP + H2O = N(6)-methyl-AMP + diphosphate + H(+). With respect to regulation, inhibited by TH588. Oxidized purine nucleoside triphosphate hydrolase which is a prominent sanitizer of the oxidized nucleotide pool. Catalyzes the hydrolysis of 2-oxo-dATP (2-hydroxy-dATP) into 2-oxo-dAMP. Also has a significant hydrolase activity toward 2-oxo-ATP, 8-oxo-dGTP and 8-oxo-dATP. Through the hydrolysis of oxidized purine nucleoside triphosphates, prevents their incorporation into DNA and the subsequent transversions A:T to C:G and G:C to T:A. Also catalyzes the hydrolysis of methylated purine nucleoside triphosphate preventing their integration into DNA. Through this antimutagenic activity protects cells from oxidative stress. This is Oxidized purine nucleoside triphosphate hydrolase (nudt1) from Danio rerio (Zebrafish).